Consider the following 874-residue polypeptide: Bifunctional apolipoprotein N-acyltransferase/polyprenol monophosphomannose synthase (874 aa).

Residues 1-593 (MKLGAWVAAQ…GRHRATSRSY (593 aa)) are apolipoprotein N-acyltransferase. Transmembrane regions (helical) follow at residues 23–42 (TRLV…FPPR), 72–89 (YGLL…PWIG), 94–115 (PGPW…GLFA), 177–194 (VALV…IEKW), and 206–223 (AVVL…AAIV). The 257-residue stretch at 241 to 497 (VTVAVVQGNV…PAYLDSQVRL (257 aa)) folds into the CN hydrolase domain. Residue glutamate 294 is the Proton acceptor of the active site. Residue lysine 359 is part of the active site. Cysteine 409 serves as the catalytic Nucleophile. The helical transmembrane segment at 509-526 (PILQWILVGAAAAVVLVA) threads the bilayer. 2 disordered regions span residues 533–609 (FPRP…NRPS) and 852–874 (RARP…DVTE). The polyprenol monophosphomannose synthase stretch occupies residues 594–874 (MTTGQPAPPA…SRVSRADVTE (281 aa)).

This sequence in the N-terminal section; belongs to the CN hydrolase family. Apolipoprotein N-acyltransferase subfamily. It in the C-terminal section; belongs to the glycosyltransferase 2 family.

The protein resides in the cell membrane. It carries out the reaction N-terminal S-1,2-diacyl-sn-glyceryl-L-cysteinyl-[lipoprotein] + a glycerophospholipid = N-acyl-S-1,2-diacyl-sn-glyceryl-L-cysteinyl-[lipoprotein] + a 2-acyl-sn-glycero-3-phospholipid + H(+). The catalysed reaction is a di-trans,poly-cis-dolichyl phosphate + GDP-alpha-D-mannose = a di-trans,poly-cis-dolichyl beta-D-mannosyl phosphate + GDP. Its pathway is protein modification; lipoprotein biosynthesis (N-acyl transfer). Functionally, catalyzes the phospholipid dependent N-acylation of the N-terminal cysteine of apolipoprotein, the last step in lipoprotein maturation. Its function is as follows. Transfers mannose from GDP-mannose to lipid acceptors to form polyprenol monophosphomannose (PPM). PMM is an alkai-stable sugar donor which adds mannose-phosphate residues to triacylated-phosphatidyl-myo-inositol mannosides (PIM2), eventually leading to generation of the cell wall glycolipid lipoglycan modulins lipoarabinomannan (LAM) and lipomannan (LM). This chain is Bifunctional apolipoprotein N-acyltransferase/polyprenol monophosphomannose synthase, found in Mycobacterium bovis (strain BCG / Pasteur 1173P2).